Reading from the N-terminus, the 306-residue chain is Pantothenate kinase (306 aa).

91–98 (GSVAVGKS) is an ATP binding site.

Belongs to the prokaryotic pantothenate kinase family.

It localises to the cytoplasm. The enzyme catalyses (R)-pantothenate + ATP = (R)-4'-phosphopantothenate + ADP + H(+). It functions in the pathway cofactor biosynthesis; coenzyme A biosynthesis; CoA from (R)-pantothenate: step 1/5. The chain is Pantothenate kinase (coaA) from Streptococcus pyogenes serotype M3 (strain ATCC BAA-595 / MGAS315).